The chain runs to 355 residues: Anthranilate phosphoribosyltransferase (355 aa).

5-phospho-alpha-D-ribose 1-diphosphate-binding positions include G91, 94–95, T99, 101–104, 119–127, and A131; these read GD, NIST, and KHGNRAMSS. G91 lines the anthranilate pocket. S103 is a Mg(2+) binding site. N122 serves as a coordination point for anthranilate. R177 is a binding site for anthranilate. 2 residues coordinate Mg(2+): D234 and E235.

Belongs to the anthranilate phosphoribosyltransferase family. Homodimer. Mg(2+) serves as cofactor.

It catalyses the reaction N-(5-phospho-beta-D-ribosyl)anthranilate + diphosphate = 5-phospho-alpha-D-ribose 1-diphosphate + anthranilate. Its pathway is amino-acid biosynthesis; L-tryptophan biosynthesis; L-tryptophan from chorismate: step 2/5. Its function is as follows. Participates in the tryptophan-dependent indole-3-acetic acid production, which is a phytohormone released by A.brasilense. Catalyzes the transfer of the phosphoribosyl group of 5-phosphorylribose-1-pyrophosphate (PRPP) to anthranilate to yield N-(5'-phosphoribosyl)-anthranilate (PRA). The protein is Anthranilate phosphoribosyltransferase of Azospirillum brasilense.